A 682-amino-acid chain; its full sequence is Solute carrier organic anion transporter family member 2B1 (682 aa).

A disordered region spans residues 1–30; it reads MPDRSTKATMGAEDIHERKVSMEPRDSHQD. Topologically, residues 1–41 are cytoplasmic; the sequence is MPDRSTKATMGAEDIHERKVSMEPRDSHQDAQPRGMFQNIK. A compositionally biased stretch (basic and acidic residues) spans 13 to 30; it reads EDIHERKVSMEPRDSHQD. The residue at position 21 (Ser-21) is a Phosphoserine. Residues 42–61 form a helical membrane-spanning segment; it reads FFVLCHSILQLAQLMISGYL. The Extracellular portion of the chain corresponds to 62–80; it reads KSSISTVEKRFGLSSQTSG. A helical membrane pass occupies residues 81 to 101; that stretch reads LLAAFNEVGNISLILFVSYFG. Over 102–107 the chain is Cytoplasmic; that stretch reads SRVHRP. A helical membrane pass occupies residues 108 to 132; sequence RMIGCGAILVAVAGLLMALPHFISE. Topologically, residues 133–176 are extracellular; sequence PYRYDHSSPDRSQDFEASLCLPTTMAPASALSNDSCSSRTETKH. The N-linked (GlcNAc...) asparagine glycan is linked to Asn-165. Residues 177-206 traverse the membrane as a helical segment; it reads LTMVGIMFTAQTLLGIGGVPIQPFGISYID. At 207-225 the chain is on the cytoplasmic side; it reads DFAHHSNSPLYLGILFAIT. The chain crosses the membrane as a helical span at residues 226 to 246; the sequence is MMGPGLAYGLGSLMLRLYVDI. Residues 247-264 are Extracellular-facing; it reads DRMPEGGINLTTKDPRWV. N-linked (GlcNAc...) asparagine glycosylation occurs at Asn-255. The helical transmembrane segment at 265–289 threads the bilayer; that stretch reads GAWWLGFLISAGLVVLAASPYFFFP. Residues 290–354 lie on the Cytoplasmic side of the membrane; the sequence is REMPKEKYEL…IKVFPRVLLR (65 aa). Ser-311 and Ser-314 each carry phosphoserine. The chain crosses the membrane as a helical span at residues 355 to 376; that stretch reads TLRHPIFLLVVLSQVCTSSMVA. Over 377–396 the chain is Extracellular; that stretch reads GTATFLPKFLERQFSITASF. The chain crosses the membrane as a helical span at residues 397–420; that stretch reads ANLLLGCLTIPLAIVGIVVGGVLV. Topologically, residues 421 to 424 are cytoplasmic; it reads KRLH. The chain crosses the membrane as a helical span at residues 425–448; the sequence is LSPMQCSALCLLGSLLCLLLSLPL. The Extracellular portion of the chain corresponds to 449–552; that stretch reads FFIGCSTHHI…SACSRLVLPF (104 aa). A Kazal-like domain is found at 471-531; sequence PSLFPGCSEP…VFYTNCSCVA (61 aa). 3 cysteine pairs are disulfide-bonded: Cys-477/Cys-508, Cys-483/Cys-504, and Cys-492/Cys-529. 2 N-linked (GlcNAc...) asparagine glycosylation sites follow: Asn-526 and Asn-533. The helical transmembrane segment at 553-575 threads the bilayer; the sequence is ILLISLGAAVASITHTPSFMLIL. Residues 576-584 are Cytoplasmic-facing; sequence RGVKKEDKT. The helical transmembrane segment at 585-610 threads the bilayer; the sequence is LAVGMQFMLLRVLAWMPSPVIHGSAI. The Extracellular segment spans residues 611-643; the sequence is DTTCVHWALTCGRRAVCRYYDHDLLRNRFIGLQ. Residues 644–661 form a helical membrane-spanning segment; that stretch reads FFFKSGSLVCFALVLAIL. Topologically, residues 662–682 are cytoplasmic; sequence RQQSREASTKATVKSSDLQEL.

The protein belongs to the organo anion transporter (TC 2.A.60) family. Expressed in liver, kidney, heart, lung and retina. Widely distributed in all brain regions.

The protein localises to the cell membrane. It localises to the basal cell membrane. The protein resides in the apical cell membrane. The enzyme catalyses coproporphyrin III(out) = coproporphyrin III(in). The catalysed reaction is substance P(out) = substance P(in). It catalyses the reaction taurocholate(out) = taurocholate(in). It carries out the reaction prostaglandin E1(out) = prostaglandin E1(in). The enzyme catalyses prostaglandin E2(out) = prostaglandin E2(in). The catalysed reaction is prostaglandin D2(out) = prostaglandin D2(in). It catalyses the reaction leukotriene C4(out) = leukotriene C4(in). It carries out the reaction L-thyroxine(out) = L-thyroxine(in). Its function is as follows. Mediates the Na(+)-independent transport of organic anions such as taurocholate, the prostaglandins D2 (PGD2), E1 (PGE1) and E2 (PGE2), leukotriene C4, thromboxane B2 and L-thyroxine. Also plays a role in the reuptake of neuropeptides such as substance P/TAC1 and vasoactive intestinal peptide/VIP released from retinal neurons. May act as a heme transporter that promotes cellular iron availability. Also transports heme by-product coproporphyrin III (CPIII), and may be involved in their hepatic disposition. May contribute to regulate the transport of organic compounds in testis across the blood-testis-barrier. Shows a pH-sensitive substrate specificity which may be ascribed to the protonation state of the binding site and leads to a stimulation of substrate transport in an acidic microenvironment. The exact transport mechanism has not been yet deciphered but most likely involves an anion exchange, coupling the cellular uptake of organic substrate with the efflux of an anionic compound. Hydrogencarbonate/HCO3(-) acts as a probable counteranion that exchanges for organic anions. Cytoplasmic glutamate may also act as counteranion in the placenta. This is Solute carrier organic anion transporter family member 2B1 from Rattus norvegicus (Rat).